The following is a 447-amino-acid chain: Bifunctional protein GlmU (447 aa).

Positions 1 to 225 are pyrophosphorylase; the sequence is MLTVAILAAG…NGELQGINNR (225 aa). UDP-N-acetyl-alpha-D-glucosamine contacts are provided by residues 7-10, Lys-21, Gln-73, and 78-79; these read LAAG and GT. Asp-103 provides a ligand contact to Mg(2+). 4 residues coordinate UDP-N-acetyl-alpha-D-glucosamine: Gly-140, Glu-154, Asn-169, and Asn-223. Asn-223 provides a ligand contact to Mg(2+). Positions 226–246 are linker; the sequence is VQLSKCEETIQNLIKEKHMLG. The interval 247 to 447 is N-acetyltransferase; it reads GVTFINPASC…QVNIENWKKN (201 aa). Positions 328 and 346 each coordinate UDP-N-acetyl-alpha-D-glucosamine. His-358 acts as the Proton acceptor in catalysis. 2 residues coordinate UDP-N-acetyl-alpha-D-glucosamine: Tyr-361 and Asn-372. Acetyl-CoA-binding residues include Ala-375, Ala-418, and Arg-435.

The protein in the N-terminal section; belongs to the N-acetylglucosamine-1-phosphate uridyltransferase family. In the C-terminal section; belongs to the transferase hexapeptide repeat family. In terms of assembly, homotrimer. Requires Mg(2+) as cofactor.

The protein localises to the cytoplasm. The catalysed reaction is alpha-D-glucosamine 1-phosphate + acetyl-CoA = N-acetyl-alpha-D-glucosamine 1-phosphate + CoA + H(+). It carries out the reaction N-acetyl-alpha-D-glucosamine 1-phosphate + UTP + H(+) = UDP-N-acetyl-alpha-D-glucosamine + diphosphate. The protein operates within nucleotide-sugar biosynthesis; UDP-N-acetyl-alpha-D-glucosamine biosynthesis; N-acetyl-alpha-D-glucosamine 1-phosphate from alpha-D-glucosamine 6-phosphate (route II): step 2/2. It functions in the pathway nucleotide-sugar biosynthesis; UDP-N-acetyl-alpha-D-glucosamine biosynthesis; UDP-N-acetyl-alpha-D-glucosamine from N-acetyl-alpha-D-glucosamine 1-phosphate: step 1/1. It participates in bacterial outer membrane biogenesis; LPS lipid A biosynthesis. Functionally, catalyzes the last two sequential reactions in the de novo biosynthetic pathway for UDP-N-acetylglucosamine (UDP-GlcNAc). The C-terminal domain catalyzes the transfer of acetyl group from acetyl coenzyme A to glucosamine-1-phosphate (GlcN-1-P) to produce N-acetylglucosamine-1-phosphate (GlcNAc-1-P), which is converted into UDP-GlcNAc by the transfer of uridine 5-monophosphate (from uridine 5-triphosphate), a reaction catalyzed by the N-terminal domain. This is Bifunctional protein GlmU from Prochlorococcus marinus (strain MIT 9515).